Consider the following 318-residue polypeptide: tRNA dimethylallyltransferase (318 aa).

An ATP-binding site is contributed by 16-23 (GPTASGKT). Residue 18–23 (TASGKT) coordinates substrate. Interaction with substrate tRNA stretches follow at residues 41–44 (DSAL), 165–169 (QRINR), 246–251 (RCVGYR), and 279–286 (KRQITWLR).

It belongs to the IPP transferase family. In terms of assembly, monomer. The cofactor is Mg(2+).

It carries out the reaction adenosine(37) in tRNA + dimethylallyl diphosphate = N(6)-dimethylallyladenosine(37) in tRNA + diphosphate. In terms of biological role, catalyzes the transfer of a dimethylallyl group onto the adenine at position 37 in tRNAs that read codons beginning with uridine, leading to the formation of N6-(dimethylallyl)adenosine (i(6)A). The protein is tRNA dimethylallyltransferase of Actinobacillus succinogenes (strain ATCC 55618 / DSM 22257 / CCUG 43843 / 130Z).